The following is a 107-amino-acid chain: MAHYKEFEFDCDFGGQRAKFKFYIGTPQEGHHPLQFQAKWLSDERGGTIPDEVMKAISQLNDLAKKNSVPLPDLCVYALGSAQETQVSNHEEDADVLETQDDNAEQV.

Residues 86 to 107 (QVSNHEEDADVLETQDDNAEQV) form a disordered region. Residues 92-107 (EDADVLETQDDNAEQV) are compositionally biased toward acidic residues.

This is an uncharacterized protein from Rickettsia prowazekii (strain Madrid E).